Reading from the N-terminus, the 183-residue chain is BLOC-1-related complex subunit 8 homolog (183 aa).

Residues 152–183 (MIGPGTATGRTEAQAATSSNPGELQRSYTTLH) form a disordered region. Residues 159-183 (TGRTEAQAATSSNPGELQRSYTTLH) are compositionally biased toward polar residues.

The protein belongs to the BORCS8 family.

It is found in the lysosome membrane. Its function is as follows. May participate in the coupling of lysosomes to microtubule plus-end-directed kinesin motor. This is BLOC-1-related complex subunit 8 homolog from Drosophila melanogaster (Fruit fly).